The sequence spans 274 residues: Nitrogenase iron protein (274 aa).

Gly8 to Ser15 provides a ligand contact to ATP. Residue Cys94 participates in [4Fe-4S] cluster binding. Position 97 is an ADP-ribosylarginine; by dinitrogenase reductase ADP-ribosyltransferase (Arg97). Cys131 serves as a coordination point for [4Fe-4S] cluster.

This sequence belongs to the NifH/BchL/ChlL family. In terms of assembly, homodimer. [4Fe-4S] cluster is required as a cofactor. In terms of processing, the reversible ADP-ribosylation of Arg-97 inactivates the nitrogenase reductase and regulates nitrogenase activity.

It catalyses the reaction N2 + 8 reduced [2Fe-2S]-[ferredoxin] + 16 ATP + 16 H2O = H2 + 8 oxidized [2Fe-2S]-[ferredoxin] + 2 NH4(+) + 16 ADP + 16 phosphate + 6 H(+). The key enzymatic reactions in nitrogen fixation are catalyzed by the nitrogenase complex, which has 2 components: the iron protein and the molybdenum-iron protein. The protein is Nitrogenase iron protein of Chlorobium chlorochromatii (strain CaD3).